Consider the following 479-residue polypeptide: Cysteine--tRNA ligase (479 aa).

C28 is a Zn(2+) binding site. Residues 30–40 (PTVYDHAHLGH) carry the 'HIGH' region motif. Residues C207, H232, and E236 each coordinate Zn(2+). Positions 264–268 (KMSKS) match the 'KMSKS' region motif. K267 serves as a coordination point for ATP.

Belongs to the class-I aminoacyl-tRNA synthetase family. Zn(2+) serves as cofactor.

It localises to the cytoplasm. It catalyses the reaction tRNA(Cys) + L-cysteine + ATP = L-cysteinyl-tRNA(Cys) + AMP + diphosphate. This is Cysteine--tRNA ligase from Methanococcus aeolicus (strain ATCC BAA-1280 / DSM 17508 / OCM 812 / Nankai-3).